Here is a 206-residue protein sequence, read N- to C-terminus: MLSAQLKTYLAEMNMSATELQQKQLIGFVEMLDKWNKAYNLTAVRDPEQMLIRHVMDSLTVSPYLEGQRFIDVGTGPGLPGIPLAIMNPDKQFVLLDSLGKRIRFQKQVQFELKINNITSVESRVEAYIPEIKFDGVLSRAFASIQDMLSWCHHLPTEKGTFYALKGQLNQQELQEMPTGFSLVETIVLHVPMLDEQRHLLKIAKQ.

S-adenosyl-L-methionine contacts are provided by residues G74, L79, 125–126, and R140; that span reads VE.

Belongs to the methyltransferase superfamily. RNA methyltransferase RsmG family.

The protein localises to the cytoplasm. The enzyme catalyses guanosine(527) in 16S rRNA + S-adenosyl-L-methionine = N(7)-methylguanosine(527) in 16S rRNA + S-adenosyl-L-homocysteine. In terms of biological role, specifically methylates the N7 position of guanine in position 527 of 16S rRNA. The protein is Ribosomal RNA small subunit methyltransferase G of Shewanella frigidimarina (strain NCIMB 400).